A 348-amino-acid chain; its full sequence is Histidinol-phosphate aminotransferase (348 aa).

K207 is modified (N6-(pyridoxal phosphate)lysine).

It belongs to the class-II pyridoxal-phosphate-dependent aminotransferase family. Histidinol-phosphate aminotransferase subfamily. In terms of assembly, homodimer. Pyridoxal 5'-phosphate is required as a cofactor.

It catalyses the reaction L-histidinol phosphate + 2-oxoglutarate = 3-(imidazol-4-yl)-2-oxopropyl phosphate + L-glutamate. The protein operates within amino-acid biosynthesis; L-histidine biosynthesis; L-histidine from 5-phospho-alpha-D-ribose 1-diphosphate: step 7/9. This Crocosphaera subtropica (strain ATCC 51142 / BH68) (Cyanothece sp. (strain ATCC 51142)) protein is Histidinol-phosphate aminotransferase.